Reading from the N-terminus, the 791-residue chain is Phenylalanine--tRNA ligase beta subunit (791 aa).

Residues 39-147 (GDALGQVVVA…DDAPVGQALA (109 aa)) form the tRNA-binding domain. The region spanning 400–475 (PQPASILLRR…RIHGYDRVPT (76 aa)) is the B5 domain. Positions 453, 459, 462, and 463 each coordinate Mg(2+). Positions 697–790 (SRYPSMRRDL…IEREHRARIR (94 aa)) constitute an FDX-ACB domain.

The protein belongs to the phenylalanyl-tRNA synthetase beta subunit family. Type 1 subfamily. In terms of assembly, tetramer of two alpha and two beta subunits. Requires Mg(2+) as cofactor.

The protein resides in the cytoplasm. It carries out the reaction tRNA(Phe) + L-phenylalanine + ATP = L-phenylalanyl-tRNA(Phe) + AMP + diphosphate + H(+). The sequence is that of Phenylalanine--tRNA ligase beta subunit from Xanthomonas campestris pv. campestris (strain 8004).